The chain runs to 64 residues: Conotoxin Ts-011 (64 aa).

The first 22 residues, 1–22 (MHCLPVLVILLLLIASTPSVDA), serve as a signal peptide directing secretion. Positions 23–52 (RPKTKDDVPPASFHGADDANRILQTLWNLR) are excised as a propeptide. Residue Ile63 is modified to Isoleucine amide.

The protein belongs to the conotoxin T superfamily. In terms of processing, contains 2 disulfide bonds that can be either 'C1-C3, C2-C4' or 'C1-C4, C2-C3', since these disulfide connectivities have been observed for conotoxins with cysteine framework V (for examples, see AC P0DQQ7 and AC P81755). As to expression, expressed by the venom duct.

It is found in the secreted. This is Conotoxin Ts-011 from Conus tessulatus (Tessellate cone).